Here is a 112-residue protein sequence, read N- to C-terminus: Urocortin-2 (112 aa).

Positions 1–22 (MTRCALLLLMVLMLGRVLVVPV) are cleaved as a signal peptide. The propeptide occupies 23–70 (TPIPTFQLRPQNSPQTTPRPAASESPSAAPTWPWAAQSHCSPTRHPGS). The interval 27 to 66 (TFQLRPQNSPQTTPRPAASESPSAAPTWPWAAQSHCSPTR) is disordered. The segment covering 38–58 (TTPRPAASESPSAAPTWPWAA) has biased composition (low complexity).

It belongs to the sauvagine/corticotropin-releasing factor/urotensin I family. As to quaternary structure, binds with high affinity to CRF receptors 2-alpha and 2-beta. Post-translationally, glycosylated.

It localises to the secreted. Functionally, suppresses food intake, delays gastric emptying and decreases heat-induced edema. Might represent an endogenous ligand for maintaining homeostasis after stress. This Homo sapiens (Human) protein is Urocortin-2 (UCN2).